Here is a 293-residue protein sequence, read N- to C-terminus: 33 kDa chaperonin (293 aa).

2 disulfides stabilise this stretch: C237–C239 and C271–C274.

Belongs to the HSP33 family. Under oxidizing conditions two disulfide bonds are formed involving the reactive cysteines. Under reducing conditions zinc is bound to the reactive cysteines and the protein is inactive.

It localises to the cytoplasm. Its function is as follows. Redox regulated molecular chaperone. Protects both thermally unfolding and oxidatively damaged proteins from irreversible aggregation. Plays an important role in the bacterial defense system toward oxidative stress. This Haemophilus influenzae (strain PittGG) protein is 33 kDa chaperonin.